The sequence spans 127 residues: Oleate-induced peroxisomal protein POX18 (127 aa).

One can recognise an SCP2 domain in the interval 14-119 (FKELHEGLAD…KATAIESVFK (106 aa)). A hydrophobic region spans residues 33 to 41 (AVNAVIVIT). Residues 43-52 (KNKEGKEQSW) are hydrophilic.

In terms of assembly, monomer.

It localises to the peroxisome. The protein operates within lipid metabolism; fatty acid metabolism. Functionally, is involved in beta-oxidation of long-chain fatty acids. Its exact function is unknown, but possesses a nonspecific lipid-transfer activity, despite the absence of a cysteine residue thought to be essential for the activity of its mammalian counterparts. In Candida maltosa (Yeast), this protein is Oleate-induced peroxisomal protein POX18 (POX18).